Here is a 248-residue protein sequence, read N- to C-terminus: Large ribosomal subunit protein uL30 (248 aa).

Residue Met1 is modified to N-acetylmethionine. 4 tandem repeats follow at residues 7-18 (KKKEVPAVPETL), 19-30 (KKKRRNFAELKI), 31-42 (KRLRKKFAQKML), and 43-54 (RKARRKLIYEKA). The segment at 7–54 (KKKEVPAVPETLKKKRRNFAELKIKRLRKKFAQKMLRKARRKLIYEKA) is 4 X 12 AA tandem repeats. The residue at position 17 (Thr17) is a Phosphothreonine. N6-acetyllysine is present on Lys124. The residue at position 127 (Lys127) is an N6-succinyllysine. Tyr139 bears the Phosphotyrosine mark.

It belongs to the universal ribosomal protein uL30 family. In terms of assembly, component of the large ribosomal subunit. Homodimer. Interacts with DHX33.

The protein localises to the cytoplasm. In terms of biological role, component of the large ribosomal subunit. The ribosome is a large ribonucleoprotein complex responsible for the synthesis of proteins in the cell. Binds to G-rich structures in 28S rRNA and in mRNAs. Plays a regulatory role in the translation apparatus; inhibits cell-free translation of mRNAs. In Homo sapiens (Human), this protein is Large ribosomal subunit protein uL30 (RPL7).